Reading from the N-terminus, the 277-residue chain is Large ribosomal subunit protein uL2 (277 aa).

2 disordered regions span residues 32 to 58 (KSLTKGKKLKSGRDSSGRISIRRRGGG) and 225 to 277 (VAMN…RRNK). Basic residues predominate over residues 258 to 277 (YKTRKKKRYSDKFIIKRRNK).

It belongs to the universal ribosomal protein uL2 family. Part of the 50S ribosomal subunit. Forms a bridge to the 30S subunit in the 70S ribosome.

One of the primary rRNA binding proteins. Required for association of the 30S and 50S subunits to form the 70S ribosome, for tRNA binding and peptide bond formation. It has been suggested to have peptidyltransferase activity; this is somewhat controversial. Makes several contacts with the 16S rRNA in the 70S ribosome. This chain is Large ribosomal subunit protein uL2, found in Borrelia garinii subsp. bavariensis (strain ATCC BAA-2496 / DSM 23469 / PBi) (Borreliella bavariensis).